We begin with the raw amino-acid sequence, 316 residues long: 1-phosphofructokinase (316 aa).

ATP contacts are provided by residues 225–230 (SMGAGG) and 256–257 (GD). Asp257 (proton acceptor) is an active-site residue.

Belongs to the carbohydrate kinase PfkB family.

It catalyses the reaction beta-D-fructose 1-phosphate + ATP = beta-D-fructose 1,6-bisphosphate + ADP + H(+). Catalyzes the ATP-dependent phosphorylation of fructose-l-phosphate to fructose-l,6-bisphosphate. The polypeptide is 1-phosphofructokinase (Rhodobacter capsulatus (Rhodopseudomonas capsulata)).